The primary structure comprises 92 residues: Small ribosomal subunit protein uS19c (92 aa).

This sequence belongs to the universal ribosomal protein uS19 family.

It localises to the plastid. It is found in the chloroplast. Its function is as follows. Protein S19 forms a complex with S13 that binds strongly to the 16S ribosomal RNA. The protein is Small ribosomal subunit protein uS19c of Cycas taitungensis (Prince sago).